The primary structure comprises 133 residues: Magnetosome protein MamC (133 aa).

Residues 1–5 (MAAFN) lie on the Cytoplasmic side of the membrane. The helical transmembrane segment at 6 to 26 (LALYLSKSIPGVGVLGGVIGG) threads the bilayer. Topologically, residues 27–67 (SAALAKNLKAKQRGEITTEEAVIDTGKEALGAGLATTVSAY) are lumenal. Residues 37-57 (KQRGEITTEEAVIDTGKEALG) form a magnetite interacting component (MIC) binds magnetite region. A helical membrane pass occupies residues 68-88 (AAGVVGGGLVVSLGTAFAVAV). Residues 89–133 (AGKYAWDYGMEQMEAKLQEKKHQEQGGQTYGDNPDPFDPQELETP) lie on the Cytoplasmic side of the membrane. A disordered region spans residues 105–133 (LQEKKHQEQGGQTYGDNPDPFDPQELETP).

It belongs to the magnetosome MamC family. In terms of assembly, probably interacts with MamA.

It is found in the magnetosome membrane. Probably helps control the size of magnetite crystals; in vitro synthesis of magnetite yields larger and more well-developed magnetite crystals in the presence of purified MamC. Binds Fe(3+). The lumenal domain probably binds magnetite crystals, affecting crystal size and shape. Purified MamC self-assembles into micelles in the presence of ferric chloride hexahydrate (FeCl(3).6H(2)O); both oxygen and iron are present in the proteinaceous micelles. Whether this is relevant in vivo is unknown. The chain is Magnetosome protein MamC from Magnetococcus marinus (strain ATCC BAA-1437 / JCM 17883 / MC-1).